The primary structure comprises 366 residues: Caffeic acid 3-O-methyltransferase (366 aa).

Methionine 131–leucine 137 lines the substrate pocket. The segment at alanine 163–methionine 181 is substrate binding. Positions 209, 232, 252, 253, and 266 each coordinate S-adenosyl-L-methionine. Histidine 270 functions as the Proton acceptor in the catalytic mechanism.

It belongs to the class I-like SAM-binding methyltransferase superfamily. Cation-independent O-methyltransferase family. COMT subfamily. Homodimer.

The enzyme catalyses (E)-caffeate + S-adenosyl-L-methionine = (E)-ferulate + S-adenosyl-L-homocysteine + H(+). The protein operates within aromatic compound metabolism; phenylpropanoid biosynthesis. In terms of biological role, catalyzes the conversion of caffeic acid to ferulic acid and of 5-hydroxyferulic acid to sinapic acid. The resulting products may subsequently be converted to the corresponding alcohols that are incorporated into lignins. This is Caffeic acid 3-O-methyltransferase (OMT) from Eucalyptus gunnii (Cider gum).